Reading from the N-terminus, the 64-residue chain is Prokaryotic ubiquitin-like protein Pup (64 aa).

Over residues methionine 1–serine 10 the composition is skewed to polar residues. Residues methionine 1–asparagine 32 are disordered. The ARC ATPase binding stretch occupies residues aspartate 20–tyrosine 58. Deamidated glutamine is present on glutamine 64. An Isoglutamyl lysine isopeptide (Gln-Lys) (interchain with K-? in acceptor proteins) cross-link involves residue glutamine 64.

The protein belongs to the prokaryotic ubiquitin-like protein family. In terms of assembly, strongly interacts with the proteasome-associated ATPase ARC through a hydrophobic interface; the interacting region of Pup lies in its C-terminal half. There is one Pup binding site per ARC hexamer ring. In terms of processing, is modified by deamidation of its C-terminal glutamine to glutamate by the deamidase Dop, a prerequisite to the subsequent pupylation process.

The protein operates within protein degradation; proteasomal Pup-dependent pathway. Protein modifier that is covalently attached to lysine residues of substrate proteins, thereby targeting them for proteasomal degradation. The tagging system is termed pupylation. The protein is Prokaryotic ubiquitin-like protein Pup of Corynebacterium diphtheriae (strain ATCC 700971 / NCTC 13129 / Biotype gravis).